A 585-amino-acid chain; its full sequence is ATP-dependent lipid A-core flippase (585 aa).

A run of 6 helical transmembrane segments spans residues 18-38, 68-88, 142-162, 163-183, 255-275, and 277-297; these read LWPTIAPFKIGLIAAAAALVL, LMAVLVIVFIFIRGITSFISS, SNALVTIVREGAYIISLLAVM, IATSWQLSVVLFIIGPVIAVL, PIVQIIASLALSAVLYLATIP, and IMSQNLSAGSFTVVFSSMLAM. Positions 30-313 constitute an ABC transmembrane type-1 domain; that stretch reads IAAAAALVLN…LTNVNSQFQR (284 aa). One can recognise an ABC transporter domain in the interval 345 to 581; sequence VSFKDVSFTY…NGAYKQLHKM (237 aa). 379–386 lines the ATP pocket; sequence GRSGSGKS.

The protein belongs to the ABC transporter superfamily. Lipid exporter (TC 3.A.1.106) family. Homodimer.

Its subcellular location is the cell inner membrane. It carries out the reaction ATP + H2O + lipid A-core oligosaccharideSide 1 = ADP + phosphate + lipid A-core oligosaccharideSide 2.. Functionally, involved in lipopolysaccharide (LPS) biosynthesis. Translocates lipid A-core from the inner to the outer leaflet of the inner membrane. Transmembrane domains (TMD) form a pore in the inner membrane and the ATP-binding domain (NBD) is responsible for energy generation. In Mannheimia succiniciproducens (strain KCTC 0769BP / MBEL55E), this protein is ATP-dependent lipid A-core flippase.